A 237-amino-acid chain; its full sequence is Ribosomal RNA small subunit methyltransferase G (237 aa).

S-adenosyl-L-methionine-binding positions include G78, F83, 129 to 130 (AE), and R148. The tract at residues 218-237 (KKETPNKYPRKAGMPNKRPL) is disordered.

Belongs to the methyltransferase superfamily. RNA methyltransferase RsmG family.

The protein localises to the cytoplasm. Functionally, specifically methylates the N7 position of a guanine in 16S rRNA. This is Ribosomal RNA small subunit methyltransferase G from Streptococcus pneumoniae serotype 19F (strain G54).